Reading from the N-terminus, the 274-residue chain is Putative pyruvate, phosphate dikinase regulatory protein (274 aa).

Residue 150–157 (GPSRTSKT) coordinates ADP.

The protein belongs to the pyruvate, phosphate/water dikinase regulatory protein family. PDRP subfamily.

The catalysed reaction is N(tele)-phospho-L-histidyl/L-threonyl-[pyruvate, phosphate dikinase] + ADP = N(tele)-phospho-L-histidyl/O-phospho-L-threonyl-[pyruvate, phosphate dikinase] + AMP + H(+). The enzyme catalyses N(tele)-phospho-L-histidyl/O-phospho-L-threonyl-[pyruvate, phosphate dikinase] + phosphate + H(+) = N(tele)-phospho-L-histidyl/L-threonyl-[pyruvate, phosphate dikinase] + diphosphate. Bifunctional serine/threonine kinase and phosphorylase involved in the regulation of the pyruvate, phosphate dikinase (PPDK) by catalyzing its phosphorylation/dephosphorylation. This is Putative pyruvate, phosphate dikinase regulatory protein from Rickettsia peacockii (strain Rustic).